The sequence spans 251 residues: Aquaporin (251 aa).

Over 1–11 (MAGETLRKIQS) the chain is Cytoplasmic. The helical transmembrane segment at 12-32 (LLGEMVASFIFGFAVYSAILG) threads the bilayer. The Extracellular portion of the chain corresponds to 33-42 (STIAQQPAAK). A helical transmembrane segment spans residues 43-63 (VIIGLTVGFSAIGIIYSFSDV). At 64–86 (TIAHFNPAITLAAILTGKMGILC) the chain is on the cytoplasmic side. The NPA signature appears at 69–71 (NPA). Residues 87-107 (GLGYMLAQCVGFILAVCALLV) form a helical membrane-spanning segment. Residues 108–133 (CSPVGYKETLNVIRPAPAPFGADNLN) lie on the Extracellular side of the membrane. The helical transmembrane segment at 134 to 154 (VFFTEFFLTAILVHIAFAVAV) threads the bilayer. Over 155-179 (NPYRPKVDTDGKFVDPDEKEPVDRR) the chain is Cytoplasmic. The helical transmembrane segment at 180–200 (ITAPLCIGLTLGFLAFMGLVT) threads the bilayer. Over 201 to 224 (SGGAFNPGLTLAPVIMSNTWQHFW) the chain is Extracellular. An NPG motif is present at residues 206-208 (NPG). A helical transmembrane segment spans residues 225-245 (LYLGAQYLGGLVGGLLQVFVL). The Cytoplasmic segment spans residues 246–251 (YKLSSN).

Belongs to the MIP/aquaporin (TC 1.A.8) family.

The protein resides in the cell membrane. Functionally, water channel required to facilitate the transport of water across membranes. Involved in osmotolerance. The polypeptide is Aquaporin (AQP) (Encephalitozoon hellem (Microsporidian parasite)).